Consider the following 322-residue polypeptide: Fructose-1,6-bisphosphatase class 1 1 (322 aa).

Residues E84, D103, L105, and D106 each contribute to the Mg(2+) site. Residues 106 to 109 (DGSS), N198, and K264 contribute to the substrate site. Mg(2+) is bound at residue E270.

This sequence belongs to the FBPase class 1 family. In terms of assembly, homotetramer. Mg(2+) serves as cofactor.

The protein resides in the cytoplasm. It carries out the reaction beta-D-fructose 1,6-bisphosphate + H2O = beta-D-fructose 6-phosphate + phosphate. It participates in carbohydrate biosynthesis; gluconeogenesis. The polypeptide is Fructose-1,6-bisphosphatase class 1 1 (Pseudoalteromonas translucida (strain TAC 125)).